A 373-amino-acid polypeptide reads, in one-letter code: Flagellar P-ring protein (373 aa).

An N-terminal signal peptide occupies residues 1 to 30 (MTNRWSFDVNKNLVTVLFTWLCLSISTAHA).

Belongs to the FlgI family. In terms of assembly, the basal body constitutes a major portion of the flagellar organelle and consists of four rings (L,P,S, and M) mounted on a central rod.

The protein resides in the periplasm. The protein localises to the bacterial flagellum basal body. Functionally, assembles around the rod to form the L-ring and probably protects the motor/basal body from shearing forces during rotation. In Aliivibrio fischeri (strain ATCC 700601 / ES114) (Vibrio fischeri), this protein is Flagellar P-ring protein.